A 510-amino-acid polypeptide reads, in one-letter code: DNA nucleotidylexotransferase (510 aa).

A Nuclear localization signal motif is present at residues 11-17 (PRRKQPK). One can recognise a BRCT domain in the interval 27-124 (KYDIKFKDIA…QPVEIERKHR (98 aa)). The tract at residues 254-258 (VGLRT) is involved in DNA binding. A 2'-deoxyribonucleoside 5'-triphosphate contacts are provided by residues 329-334 (GFRRGN) and 338-341 (HDVD). Residues aspartate 339, aspartate 341, and aspartate 434 each coordinate Mg(2+). 449–450 (GW) serves as a coordination point for a 2'-deoxyribonucleoside 5'-triphosphate.

Belongs to the DNA polymerase type-X family. Requires Mg(2+) as cofactor.

Its subcellular location is the nucleus. It catalyses the reaction DNA(n) + a 2'-deoxyribonucleoside 5'-triphosphate = DNA(n+1) + diphosphate. In terms of biological role, template-independent DNA polymerase which catalyzes the random addition of deoxynucleoside 5'-triphosphate to the 3'-end of a DNA initiator. One of the in vivo functions of this enzyme is the addition of nucleotides at the junction (N region) of rearranged Ig heavy chain and T-cell receptor gene segments during the maturation of B- and T-cells. This chain is DNA nucleotidylexotransferase (DNTT), found in Ambystoma mexicanum (Axolotl).